Consider the following 280-residue polypeptide: Probable endonuclease 4 (280 aa).

The Zn(2+) site is built by His-69, His-109, Glu-145, Asp-179, His-182, His-216, Asp-229, His-231, and Glu-261.

The protein belongs to the AP endonuclease 2 family. It depends on Zn(2+) as a cofactor.

It carries out the reaction Endonucleolytic cleavage to 5'-phosphooligonucleotide end-products.. In terms of biological role, endonuclease IV plays a role in DNA repair. It cleaves phosphodiester bonds at apurinic or apyrimidinic (AP) sites, generating a 3'-hydroxyl group and a 5'-terminal sugar phosphate. This Photorhabdus laumondii subsp. laumondii (strain DSM 15139 / CIP 105565 / TT01) (Photorhabdus luminescens subsp. laumondii) protein is Probable endonuclease 4.